Here is a 293-residue protein sequence, read N- to C-terminus: Single-pass membrane and coiled-coil domain-containing protein 2 (293 aa).

The stretch at 116-188 (KNLLEFLLKD…SAKLRMYQME (73 aa)) forms a coiled coil. Residues 234–254 (IFIMFYVLTVTGLLCYILFFG) traverse the membrane as a helical segment.

It localises to the membrane. The sequence is that of Single-pass membrane and coiled-coil domain-containing protein 2 (SMCO2) from Macaca fascicularis (Crab-eating macaque).